Reading from the N-terminus, the 72-residue chain is Translation initiation factor IF-1 (72 aa).

The 72-residue stretch at 1–72 (MSKEEAIEVE…TRGRITYRAK (72 aa)) folds into the S1-like domain.

Belongs to the IF-1 family. As to quaternary structure, component of the 30S ribosomal translation pre-initiation complex which assembles on the 30S ribosome in the order IF-2 and IF-3, IF-1 and N-formylmethionyl-tRNA(fMet); mRNA recruitment can occur at any time during PIC assembly.

The protein resides in the cytoplasm. Its function is as follows. One of the essential components for the initiation of protein synthesis. Stabilizes the binding of IF-2 and IF-3 on the 30S subunit to which N-formylmethionyl-tRNA(fMet) subsequently binds. Helps modulate mRNA selection, yielding the 30S pre-initiation complex (PIC). Upon addition of the 50S ribosomal subunit IF-1, IF-2 and IF-3 are released leaving the mature 70S translation initiation complex. The polypeptide is Translation initiation factor IF-1 (Geobacter sulfurreducens (strain ATCC 51573 / DSM 12127 / PCA)).